The chain runs to 88 residues: Small ribosomal subunit protein uS17 (88 aa).

It belongs to the universal ribosomal protein uS17 family. In terms of assembly, part of the 30S ribosomal subunit.

Functionally, one of the primary rRNA binding proteins, it binds specifically to the 5'-end of 16S ribosomal RNA. This is Small ribosomal subunit protein uS17 from Oleidesulfovibrio alaskensis (strain ATCC BAA-1058 / DSM 17464 / G20) (Desulfovibrio alaskensis).